Here is a 155-residue protein sequence, read N- to C-terminus: Regulatory protein RecX (155 aa).

The protein belongs to the RecX family.

It localises to the cytoplasm. In terms of biological role, modulates RecA activity. In Pseudomonas syringae pv. tomato (strain ATCC BAA-871 / DC3000), this protein is Regulatory protein RecX.